Here is a 292-residue protein sequence, read N- to C-terminus: 4-hydroxy-tetrahydrodipicolinate synthase 2 (292 aa).

Threonine 46 contacts pyruvate. The Proton donor/acceptor role is filled by tyrosine 134. Lysine 162 functions as the Schiff-base intermediate with substrate in the catalytic mechanism. Valine 204 contributes to the pyruvate binding site.

This sequence belongs to the DapA family. As to quaternary structure, homotetramer; dimer of dimers.

The protein resides in the cytoplasm. The catalysed reaction is L-aspartate 4-semialdehyde + pyruvate = (2S,4S)-4-hydroxy-2,3,4,5-tetrahydrodipicolinate + H2O + H(+). The protein operates within amino-acid biosynthesis; L-lysine biosynthesis via DAP pathway; (S)-tetrahydrodipicolinate from L-aspartate: step 3/4. Catalyzes the condensation of (S)-aspartate-beta-semialdehyde [(S)-ASA] and pyruvate to 4-hydroxy-tetrahydrodipicolinate (HTPA). This Halalkalibacterium halodurans (strain ATCC BAA-125 / DSM 18197 / FERM 7344 / JCM 9153 / C-125) (Bacillus halodurans) protein is 4-hydroxy-tetrahydrodipicolinate synthase 2.